The primary structure comprises 651 residues: Protein numb homolog (651 aa).

Residues 33 to 193 enclose the PID domain; it reads RTGKCSFPVK…ASRTTFTREG (161 aa). Residue Thr-102 is modified to Phosphothreonine; by AAK1. Ser-194 carries the phosphoserine modification. Residues 228–255 form a disordered region; it reads SSVAPGNTAPSPSSPTSPTSDATTSLEM. Residues 235-252 are compositionally biased toward low complexity; sequence TAPSPSSPTSPTSDATTS. A Phosphothreonine modification is found at Thr-243. Ser-244 bears the Phosphoserine mark. 2 positions are modified to phosphoserine; by CaMK1: Ser-276 and Ser-295. Disordered regions lie at residues 419-483 and 623-651; these read QSSG…SPFQ and LENK…EIEL. Ser-425 is subject to Phosphoserine. Thr-436 carries the post-translational modification Phosphothreonine. A compositionally biased stretch (basic and acidic residues) spans 436 to 449; it reads TPSEADRWLEEVSK. Ser-438 carries the post-translational modification Phosphoserine. Positions 453 to 466 are enriched in low complexity; it reads AQQPQASAAPLQPV. Residues 630–644 are compositionally biased toward polar residues; it reads RTNPSPTNPFSSDLQ. Ser-634 bears the Phosphoserine mark.

In terms of assembly, interacts with SIAH1. Interacts with LNX. Interacts with CDH1. Interacts with TFAP2A and TFAP2B. Interacts with RALBP1 in a complex also containing EPN1 and TFAP2A during interphase and mitosis. Interacts with AAK1. May interact with DUOXA1. In terms of processing, phosphorylated on Ser-276 and Ser-295 by CaMK1. Post-translationally, isoform 1 and isoform 2 are ubiquitinated by LNX leading to their subsequent proteasomal degradation. Ubiquitinated; mediated by SIAH1 and leading to its subsequent proteasomal degradation.

The protein localises to the cell membrane. The protein resides in the endosome membrane. Functionally, regulates clathrin-mediated receptor endocytosis. Plays a role in the process of neurogenesis. Required throughout embryonic neurogenesis to maintain neural progenitor cells, also called radial glial cells (RGCs), by allowing their daughter cells to choose progenitor over neuronal cell fate. Not required for the proliferation of neural progenitor cells before the onset of neurogenesis. Also involved postnatally in the subventricular zone (SVZ) neurogenesis by regulating SVZ neuroblasts survival and ependymal wall integrity. May also mediate local repair of brain ventricular wall damage. The chain is Protein numb homolog from Homo sapiens (Human).